Here is a 254-residue protein sequence, read N- to C-terminus: Ciliary microtubule associated protein 1A (254 aa).

2 STPGR repeats span residues 180-205 (PGPA…MAAR) and 216-241 (PGPG…FGIK). Residues 207-228 (EPPGDKTLKPGPGAHSPEKVTL) are disordered.

The protein belongs to the CIMAP family. Microtubule inner protein component of sperm flagellar doublet microtubules. Testis-specific (at protein level). Expression restricted to the germ cell fraction, absent in somatic cell fractions such as Sertoli and Leydig cells. Expression detected in the third week postpartum (23 days) after haploid germ cells developed, expression increased with age. Expressed in the tails of elongated spermatids sticking out toward the tubular lumen, and in cytoplasmic droplets still attached to the spermatid tail membrane. Expressed in the tails of mature sperm, from the connecting piece proximal to the head, along the middle and principal pieces, down to the distal end piece.

The protein localises to the cytoplasm. The protein resides in the cytoskeleton. It localises to the flagellum axoneme. Functionally, outer dense fibers are filamentous structures located on the outside of the axoneme in the midpiece and principal piece of the mammalian sperm tail. May help to maintain the passive elastic structures and elastic recoil of the sperm tail. This is Ciliary microtubule associated protein 1A (Cimap1a) from Mus musculus (Mouse).